The sequence spans 164 residues: Protein-export protein SecB (164 aa).

This sequence belongs to the SecB family. In terms of assembly, homotetramer, a dimer of dimers. One homotetramer interacts with 1 SecA dimer.

The protein resides in the cytoplasm. Its function is as follows. One of the proteins required for the normal export of preproteins out of the cell cytoplasm. It is a molecular chaperone that binds to a subset of precursor proteins, maintaining them in a translocation-competent state. It also specifically binds to its receptor SecA. The polypeptide is Protein-export protein SecB (Caulobacter sp. (strain K31)).